An 81-amino-acid polypeptide reads, in one-letter code: MSHSVKIYDTCIGCTQCVRACPTDVLEMIPWDGCKAKQIASAPRTEDCVGCKRCESACPTDFLSVRVYLSHETTRSMGLAY.

4Fe-4S ferredoxin-type domains follow at residues 2–31 and 39–68; these read SHSVKIYDTCIGCTQCVRACPTDVLEMIPW and IASAPRTEDCVGCKRCESACPTDFLSVRVY. Positions 11, 14, 17, 21, 48, 51, 54, and 58 each coordinate [4Fe-4S] cluster.

As to quaternary structure, the eukaryotic PSI reaction center is composed of at least 11 subunits. Requires [4Fe-4S] cluster as cofactor.

Its subcellular location is the plastid. The protein localises to the chloroplast thylakoid membrane. The enzyme catalyses reduced [plastocyanin] + hnu + oxidized [2Fe-2S]-[ferredoxin] = oxidized [plastocyanin] + reduced [2Fe-2S]-[ferredoxin]. Its function is as follows. Apoprotein for the two 4Fe-4S centers FA and FB of photosystem I (PSI); essential for photochemical activity. FB is the terminal electron acceptor of PSI, donating electrons to ferredoxin. The C-terminus interacts with PsaA/B/D and helps assemble the protein into the PSI complex. Required for binding of PsaD and PsaE to PSI. PSI is a plastocyanin-ferredoxin oxidoreductase, converting photonic excitation into a charge separation, which transfers an electron from the donor P700 chlorophyll pair to the spectroscopically characterized acceptors A0, A1, FX, FA and FB in turn. The chain is Photosystem I iron-sulfur center from Arabis hirsuta (Hairy rock-cress).